The following is a 620-amino-acid chain: Somatic embryogenesis receptor kinase 4 (620 aa).

The signal sequence occupies residues 1 to 33; it reads MTSSKMEQRSLLCFLYLLLLFNFTLRVAGNAEG. The Extracellular segment spans residues 34 to 234; it reads DALTQLKNSL…GGQMTAAIAG (201 aa). LRR repeat units lie at residues 100–122, 124–146, 148–170, 171–193, and 194–215; these read NLQYLELYSNNITGEIPEELGDL, ELVSLDLYANSISGPIPSSLGKL, KLRFLRLNNNSLSGEIPMTLTSV, QLQVLDISNNRLSGDIPVNGSFS, and LFTPISFANNSLTDLPEPPPTS. Asparagine 110 carries an N-linked (GlcNAc...) asparagine glycan. Residues asparagine 156, asparagine 189, and asparagine 202 are each glycosylated (N-linked (GlcNAc...) asparagine). Positions 205-227 are disordered; the sequence is LTDLPEPPPTSTSPTPPPPSGGQ. The segment covering 209–224 has biased composition (pro residues); the sequence is PEPPPTSTSPTPPPPS. Residues 235 to 255 form a helical membrane-spanning segment; sequence GVAAGAALLFAVPAIAFAWWL. Residues 256–620 lie on the Cytoplasmic side of the membrane; it reads RRKPQDHFFD…IENDYPSGPR (365 aa). Threonine 291 carries the post-translational modification Phosphothreonine. Positions 294–591 constitute a Protein kinase domain; the sequence is FSNKNVLGRG…KEEMPIHDFN (298 aa). The residue at position 295 (serine 295) is a Phosphoserine. Residues 300-308 and lysine 322 contribute to the ATP site; that span reads LGRGGFGKV. Phosphoserine is present on residues serine 375 and serine 378. The Proton acceptor role is filled by aspartate 421. Threonine 454, threonine 455, and threonine 460 each carry phosphothreonine. At tyrosine 468 the chain carries Phosphotyrosine. Serine 470 is modified (phosphoserine). Threonine 471 is subject to Phosphothreonine. Serine 475 is modified (phosphoserine). At threonine 551 the chain carries Phosphothreonine.

It belongs to the protein kinase superfamily. Ser/Thr protein kinase family. As to quaternary structure, interacts with the EF-Tu receptor EFR and FLS2 in a specific ligand-induced manner. Interacts with TMK4/BARK1. Interacts with ERECTA in a EPF2-induced manner. Interacts with ERL1 in a EPF1-induced manner. Interacts with TMM. Forms a complex with MIK2 in response to SCOOP12 perception. In terms of processing, autophosphorylated on Thr and Tyr residues.

It is found in the cell membrane. The catalysed reaction is L-seryl-[protein] + ATP = O-phospho-L-seryl-[protein] + ADP + H(+). It catalyses the reaction L-threonyl-[protein] + ATP = O-phospho-L-threonyl-[protein] + ADP + H(+). The enzyme catalyses L-tyrosyl-[protein] + ATP = O-phospho-L-tyrosyl-[protein] + ADP + H(+). Functionally, dual specificity kinase acting on both serine/threonine- and tyrosine-containing substrates. Positively regulates the BR-dependent plant growth pathway and negatively regulates the BR-independent cell-death pathway. Required during SCOOP small peptides (e.g. SCOOP10 and SCOOP12) perception and signaling; associates with MIK2 as a coreceptor upon MIK2 perception of SCOOP peptides, and relays the signaling through the activation of receptor-like cytosolic kinases (RLCKs) BIK1 and PBL1. The protein is Somatic embryogenesis receptor kinase 4 of Arabidopsis thaliana (Mouse-ear cress).